The sequence spans 783 residues: Probable alpha,alpha-trehalose-phosphate synthase [UDP-forming] 3 (783 aa).

The glycosyltransferase stretch occupies residues 11–456 (QTLLVVANRL…GFDFLSELND (446 aa)).

In the N-terminal section; belongs to the glycosyltransferase 20 family. The protein in the C-terminal section; belongs to the trehalose phosphatase family.

It catalyses the reaction D-glucose 6-phosphate + UDP-alpha-D-glucose = alpha,alpha-trehalose 6-phosphate + UDP + H(+). This chain is Probable alpha,alpha-trehalose-phosphate synthase [UDP-forming] 3 (TPS3), found in Arabidopsis thaliana (Mouse-ear cress).